A 287-amino-acid polypeptide reads, in one-letter code: Bifunctional protein FolD (287 aa).

Residues 166–168 (GAS) and I232 each bind NADP(+).

This sequence belongs to the tetrahydrofolate dehydrogenase/cyclohydrolase family. In terms of assembly, homodimer.

It catalyses the reaction (6R)-5,10-methylene-5,6,7,8-tetrahydrofolate + NADP(+) = (6R)-5,10-methenyltetrahydrofolate + NADPH. The catalysed reaction is (6R)-5,10-methenyltetrahydrofolate + H2O = (6R)-10-formyltetrahydrofolate + H(+). It participates in one-carbon metabolism; tetrahydrofolate interconversion. In terms of biological role, catalyzes the oxidation of 5,10-methylenetetrahydrofolate to 5,10-methenyltetrahydrofolate and then the hydrolysis of 5,10-methenyltetrahydrofolate to 10-formyltetrahydrofolate. This Chromohalobacter salexigens (strain ATCC BAA-138 / DSM 3043 / CIP 106854 / NCIMB 13768 / 1H11) protein is Bifunctional protein FolD.